Consider the following 377-residue polypeptide: Nitric oxide reductase FlRd-NAD(+) reductase (377 aa).

It belongs to the FAD-dependent oxidoreductase family. Requires FAD as cofactor.

It localises to the cytoplasm. The catalysed reaction is 2 reduced [nitric oxide reductase rubredoxin domain] + NAD(+) + H(+) = 2 oxidized [nitric oxide reductase rubredoxin domain] + NADH. It participates in nitrogen metabolism; nitric oxide reduction. Its function is as follows. One of at least two accessory proteins for anaerobic nitric oxide (NO) reductase. Reduces the rubredoxin moiety of NO reductase. The protein is Nitric oxide reductase FlRd-NAD(+) reductase of Shigella boydii serotype 18 (strain CDC 3083-94 / BS512).